The sequence spans 157 residues: MSSKSLRLIVVGRLRIPFWRAAAEHYYKRISCWRAIYETIIKDGNSSLSVSQRKAMEGKNILAALEPIDIPICLDEKGKSISSQEFANFLRNYFENTTKRPCFIIGGAFGLDSSVCNIANDCLSLGNITFPHELARVIFLEQVYRAETLLRNIPYHH.

Residues leucine 74, glycine 106, and 125-130 (LGNITF) each bind S-adenosyl-L-methionine.

The protein belongs to the RNA methyltransferase RlmH family. In terms of assembly, homodimer.

The protein localises to the cytoplasm. The catalysed reaction is pseudouridine(1915) in 23S rRNA + S-adenosyl-L-methionine = N(3)-methylpseudouridine(1915) in 23S rRNA + S-adenosyl-L-homocysteine + H(+). In terms of biological role, specifically methylates the pseudouridine at position 1915 (m3Psi1915) in 23S rRNA. The chain is Ribosomal RNA large subunit methyltransferase H from Lawsonia intracellularis (strain PHE/MN1-00).